The sequence spans 416 residues: Enterobactin exporter EntS (416 aa).

The Cytoplasmic segment spans residues 1–21 (MNKQSWLLNLSLLKTHPAFRA). A helical transmembrane segment spans residues 22-42 (VFLARFISIVSLGLLGVAVPV). The Periplasmic segment spans residues 43–55 (QIQMMTHSTWQVG). A helical transmembrane segment spans residues 56–76 (LSVTLTGGAMFVGLMVGGVLA). Residues 77-83 (DRYERKK) are Cytoplasmic-facing. The chain crosses the membrane as a helical span at residues 84–104 (VILLARGTCGIGFIGLCLNAL). Topologically, residues 105–109 (LPEPS) are periplasmic. The helical transmembrane segment at 110 to 130 (LLAIYLLGLWDGFFASLGVTA) threads the bilayer. At 131–156 (LLAATPALVGRENLMQAGAITMLTVR) the chain is on the cytoplasmic side. Residues 157–177 (LGSVISPMIGGLLLATGGVAW) traverse the membrane as a helical segment. Residue asparagine 178 is a topological domain, periplasmic. The chain crosses the membrane as a helical span at residues 179-199 (YGLAAAGTFITLLPLLSLPAL). Topologically, residues 200 to 218 (PPPPQPREHPLKSLLAGFR) are cytoplasmic. Residues 219 to 239 (FLLASPLVGGIALLGGLLTMA) traverse the membrane as a helical segment. Topologically, residues 240-256 (SAVRVLYPALADNWQMS) are periplasmic. The helical transmembrane segment at 257-277 (AAQIGFLYAAIPLGAAIGALT) threads the bilayer. The Cytoplasmic portion of the chain corresponds to 278–287 (SGKLAHSARP). Residues 288 to 307 (GLLMLLSTLGSFLAIGLFGL) form a helical membrane-spanning segment. The Periplasmic segment spans residues 308 to 313 (MPMWIL). Residues 314-336 (GVVCLALFGWLSAVSSLLQYTML) traverse the membrane as a helical segment. The Cytoplasmic segment spans residues 337–356 (QTQTPEAMLGRINGLWTAQN). Residues 357-377 (VTGDAIGAALLGGLGAMMTPV) form a helical membrane-spanning segment. Residue alanine 378 is a topological domain, periplasmic. A helical transmembrane segment spans residues 379–399 (SASASGFGLLIIGVLLLLVLV). At 400-416 (ELRHFRQTPPQVTASDS) the chain is on the cytoplasmic side.

It belongs to the major facilitator superfamily. EntS (TC 2.A.1.38) family.

It is found in the cell inner membrane. Component of an export pathway for enterobactin. This is Enterobactin exporter EntS from Escherichia coli (strain K12 / MC4100 / BW2952).